Consider the following 92-residue polypeptide: Conotoxin Mr15.3 (92 aa).

Positions 1 to 20 (MSTLKMMLLILLLLLPMATF) are cleaved as a signal peptide. Residues 21 to 53 (DSDGQAIPGGGIPSAVNSRVRGDEKSGRSLEKR) constitute a propeptide that is removed on maturation.

The protein belongs to the conotoxin N superfamily. In terms of processing, contains 4 disulfide bonds. Expressed by the venom duct.

It localises to the secreted. The protein is Conotoxin Mr15.3 of Conus marmoreus (Marble cone).